A 208-amino-acid chain; its full sequence is Large ribosomal subunit protein uL3 (208 aa).

It belongs to the universal ribosomal protein uL3 family. As to quaternary structure, part of the 50S ribosomal subunit. Forms a cluster with proteins L14 and L19.

One of the primary rRNA binding proteins, it binds directly near the 3'-end of the 23S rRNA, where it nucleates assembly of the 50S subunit. The polypeptide is Large ribosomal subunit protein uL3 (Salinibacter ruber (strain DSM 13855 / M31)).